A 430-amino-acid chain; its full sequence is Serine--tRNA ligase (430 aa).

237–239 (TAE) lines the L-serine pocket. 268–270 (RSE) is an ATP binding site. Residue Glu-291 participates in L-serine binding. Residue 355–358 (EISS) coordinates ATP. Position 391 (Ser-391) interacts with L-serine.

This sequence belongs to the class-II aminoacyl-tRNA synthetase family. Type-1 seryl-tRNA synthetase subfamily. Homodimer. The tRNA molecule binds across the dimer.

Its subcellular location is the cytoplasm. The catalysed reaction is tRNA(Ser) + L-serine + ATP = L-seryl-tRNA(Ser) + AMP + diphosphate + H(+). It catalyses the reaction tRNA(Sec) + L-serine + ATP = L-seryl-tRNA(Sec) + AMP + diphosphate + H(+). The protein operates within aminoacyl-tRNA biosynthesis; selenocysteinyl-tRNA(Sec) biosynthesis; L-seryl-tRNA(Sec) from L-serine and tRNA(Sec): step 1/1. Catalyzes the attachment of serine to tRNA(Ser). Is also able to aminoacylate tRNA(Sec) with serine, to form the misacylated tRNA L-seryl-tRNA(Sec), which will be further converted into selenocysteinyl-tRNA(Sec). This is Serine--tRNA ligase from Shigella dysenteriae serotype 1 (strain Sd197).